The following is a 171-amino-acid chain: Co-chaperone protein HscB (171 aa).

Residues 2–74 (DYFTLFGLPA…LTRAEYLLSL (73 aa)) enclose the J domain.

The protein belongs to the HscB family. As to quaternary structure, interacts with HscA and stimulates its ATPase activity. Interacts with IscU.

In terms of biological role, co-chaperone involved in the maturation of iron-sulfur cluster-containing proteins. Seems to help targeting proteins to be folded toward HscA. The polypeptide is Co-chaperone protein HscB (Salmonella agona (strain SL483)).